The following is a 564-amino-acid chain: Kelch-like protein 12 (564 aa).

The 68-residue stretch at 29–96 (CDITLRVEGT…VYTETVLVTV (68 aa)) folds into the BTB domain. A BACK domain is found at 131–232 (CLGIRDFAET…LTPRYITDVI (102 aa)). Kelch repeat units lie at residues 278-325 (VLLV…ALND), 327-375 (VYVI…TLGD), 376-422 (MIYV…VASG), 423-469 (LIYC…LLND), 471-516 (IYVV…VLRG), and 518-563 (LYAI…VLRE).

As to quaternary structure, component of the BCR(KLHL12) E3 ubiquitin ligase complex.

It is found in the cytoplasmic vesicle. Its subcellular location is the COPII-coated vesicle. It functions in the pathway protein modification; protein ubiquitination. Its function is as follows. Substrate-specific adapter of a BCR (BTB-CUL3-RBX1) E3 ubiquitin ligase complex that acts as a negative regulator of Wnt signaling pathway and ER-Golgi transport. The BCR(KLHL12) complex is involved in ER-Golgi transport by regulating the size of COPII coats, thereby playing a key role in collagen export, which is required for embryonic stem (ES) cells division. Negatively regulates the Wnt signaling pathway, possibly via the targeted ubiquitination and subsequent proteolysis of dvl2 and dvl3. Regulates convergent-extension movements during early embryonic development. The protein is Kelch-like protein 12 (klhl12) of Danio rerio (Zebrafish).